The chain runs to 169 residues: Peptide methionine sulfoxide reductase MsrA (169 aa).

Cys-10 is a catalytic residue.

Belongs to the MsrA Met sulfoxide reductase family.

It carries out the reaction L-methionyl-[protein] + [thioredoxin]-disulfide + H2O = L-methionyl-(S)-S-oxide-[protein] + [thioredoxin]-dithiol. It catalyses the reaction [thioredoxin]-disulfide + L-methionine + H2O = L-methionine (S)-S-oxide + [thioredoxin]-dithiol. Has an important function as a repair enzyme for proteins that have been inactivated by oxidation. Catalyzes the reversible oxidation-reduction of methionine sulfoxide in proteins to methionine. This chain is Peptide methionine sulfoxide reductase MsrA, found in Streptococcus pyogenes serotype M1.